Consider the following 146-residue polypeptide: Hemoglobin subunit beta-1 (146 aa).

The Globin domain maps to 2–146 (KWTDKERAVI…VVSALGKQYC (145 aa)). Residues histidine 63 and histidine 92 each coordinate heme b.

It belongs to the globin family. In terms of assembly, heterotetramer of two alpha chains and two beta chains. Red blood cells.

Its function is as follows. Involved in oxygen transport from gills to the various peripheral tissues. The sequence is that of Hemoglobin subunit beta-1 from Lycodes reticulatus (Arctic eelpout).